We begin with the raw amino-acid sequence, 282 residues long: Heat stress transcription factor A-6a (282 aa).

A DNA-binding region spans residues 17 to 111 (PTAFLTKTYN…LLKNIKRRKT (95 aa)). Residues 111–177 (TSSQTQTQSL…MMMNFLLKKI (67 aa)) form a hydrophobic repeat HR-A/B region. Positions 175–190 (KKIKKPSFLQSLRKRN) match the Bipartite nuclear localization signal motif. Positions 261–270 (EGIWKGFVLS) match the AHA motif.

This sequence belongs to the HSF family. Class A subfamily. As to quaternary structure, homotrimer. Exhibits temperature-dependent phosphorylation.

The protein localises to the nucleus. Transcriptional activator that specifically binds DNA sequence 5'-AGAAnnTTCT-3' known as heat shock promoter elements (HSE). The protein is Heat stress transcription factor A-6a (HSFA6A) of Arabidopsis thaliana (Mouse-ear cress).